Reading from the N-terminus, the 221-residue chain is Chalcone--flavanone isomerase 2 (221 aa).

Residues threonine 50, asparagine 115, and serine 192 each contribute to the substrate site.

The protein belongs to the chalcone isomerase family.

It carries out the reaction a chalcone = a flavanone.. The protein operates within secondary metabolite biosynthesis; flavonoid biosynthesis. Catalyzes the intramolecular cyclization of bicyclic chalcones into tricyclic (S)-flavanones. Responsible for the isomerization of 4,2',4',6'-tetrahydroxychalcone (also termed chalcone) into naringenin. This is Chalcone--flavanone isomerase 2 (CHI2) from Lotus japonicus (Lotus corniculatus var. japonicus).